Here is a 2254-residue protein sequence, read N- to C-terminus: Voltage-dependent T-type calcium channel subunit alpha-1G (2254 aa).

The tract at residues 1–48 is disordered; sequence MDEEEDGAGAEESGQPRSFTQLNDLSGAGGRQGPGSTEKDPGSADSEA. Over 1–80 the chain is Cytoplasmic; that stretch reads MDEEEDGAGA…RSWCLRTVCN (80 aa). The span at 15-24 shows a compositional bias: polar residues; sequence QPRSFTQLND. An I repeat occupies 68 to 398; that stretch reads SRPRSWCLRT…LCLVVIATQF (331 aa). Residues 81–101 form a helical membrane-spanning segment; that stretch reads PWFERVSMLVILLNCVTLGMF. Residues 102-119 lie on the Extracellular side of the membrane; it reads RPCEDIACDSQRCRILQA. The chain crosses the membrane as a helical span at residues 120 to 141; it reads FDDFIFAFFAVEMVVKMVALGI. Residues 142–150 are Cytoplasmic-facing; sequence FGKKCYLGD. The chain crosses the membrane as a helical span at residues 151–170; that stretch reads TWNRLDFFIVIAGMLEYSLD. Residues 171–175 are Extracellular-facing; that stretch reads LQNVS. The N-linked (GlcNAc...) asparagine glycan is linked to N173. The helical transmembrane segment at 176–193 threads the bilayer; the sequence is FSAVRTVRVLRPLRAINR. The Cytoplasmic segment spans residues 194 to 213; that stretch reads VPSMRILVTLLLDTLPMLGN. The helical transmembrane segment at 214–234 threads the bilayer; it reads VLLLCFFVFFIFGIVGVQLWA. The Extracellular segment spans residues 235-370; sequence GLLRNRCFLP…YFVMDAHSFY (136 aa). N-linked (GlcNAc...) asparagine glycans are attached at residues N246, N306, N310, and N322. The chain crosses the membrane as a helical span at residues 371 to 395; the sequence is NFIYFILLIIVGSFFMINLCLVVIA. Topologically, residues 396-744 are cytoplasmic; the sequence is TQFSETKQRE…DTFRKIVDSK (349 aa). Position 467 is a phosphoserine (S467). Positions 494–506 are enriched in basic residues; the sequence is LVHHHHHHHHHYH. 4 disordered regions span residues 494 to 513, 525 to 553, 579 to 598, and 699 to 721; these read LVHH…GTLR, DANG…AESV, ASGR…TSPP, and DAQH…GPDA. Pro residues predominate over residues 534-545; it reads LPPPSTPTPSGG. S716 bears the Phosphoserine mark. Residues 730–968 form an II repeat; the sequence is WRLICDTFRK…LLVAILVEGF (239 aa). The helical transmembrane segment at 745 to 765 threads the bilayer; the sequence is YFGRGIMIAILVNTLSMGIEY. The Extracellular segment spans residues 766–778; it reads HEQPEELTNALEI. A helical membrane pass occupies residues 779 to 800; that stretch reads SNIVFTSLFALEMLLKLLVYGP. Residues 801–806 lie on the Cytoplasmic side of the membrane; the sequence is FGYIKN. The helical transmembrane segment at 807 to 825 threads the bilayer; that stretch reads PYNIFDGVIVVISVWEIVG. Topologically, residues 826–833 are extracellular; sequence QQGGGLSV. A helical membrane pass occupies residues 834–857; it reads LRTFRLMRVLKLVRFLPALQRQLV. At 858–868 the chain is on the cytoplasmic side; that stretch reads VLMKTMDNVAT. Residues 869–889 traverse the membrane as a helical segment; that stretch reads FCMLLMLFIFIFSILGMHLFG. Residues 890–940 are Extracellular-facing; sequence CKFASERDGDTLPDRKNFDSLLWAIVTVFQILTQEDWNKVLYNGMASTSSW. Residues 941 to 965 form a helical membrane-spanning segment; sequence AALYFIALMTFGNYVLFNLLVAILV. The Cytoplasmic portion of the chain corresponds to 966–1251; it reads EGFQAEGDAT…SRFRLLCHRI (286 aa). The disordered stretch occupies residues 1024–1209; sequence TPMSHPKSSS…GDDDNDEGNL (186 aa). Low complexity-rich tracts occupy residues 1041–1052 and 1065–1091; these read GSGSRRTSSSGS and PPSA…SRNS. Composition is skewed to acidic residues over residues 1117–1126 and 1196–1206; these read ESQDEEESSE and PQLDGDDDNDE. A phosphoserine mark is found at S1118, S1124, and S1125. An III repeat occupies 1242 to 1519; the sequence is SRFRLLCHRI…MFVGVVVENF (278 aa). The chain crosses the membrane as a helical span at residues 1252-1274; sequence ITHKMFDHVVLVIIFLNCITIAM. The Extracellular segment spans residues 1275–1292; that stretch reads ERPKIDPHSAERIFLTLS. Residues 1293-1313 form a helical membrane-spanning segment; that stretch reads NYIFTAVFLAEMTVKVVALGW. Topologically, residues 1314 to 1323 are cytoplasmic; the sequence is CFGEQAYLRS. The chain crosses the membrane as a helical span at residues 1324-1343; it reads SWNVLDGLLVLISVIDILVS. Residues 1344–1357 are Extracellular-facing; that stretch reads MVSDSGTKILGMLR. A helical transmembrane segment spans residues 1358–1379; the sequence is VLRLLRTLRPLRVISRAQGLKL. Over 1380 to 1389 the chain is Cytoplasmic; that stretch reads VVETLMSSLK. A helical transmembrane segment spans residues 1390–1413; the sequence is PIGNIVVICCAFFIIFGILGVQLF. Topologically, residues 1414–1490 are extracellular; the sequence is KGKFFVCQGE…DQQPIMNHNP (77 aa). N1427 and N1430 each carry an N-linked (GlcNAc...) asparagine glycan. A helical membrane pass occupies residues 1491–1516; sequence WMLLYFISFLLIVAFFVLNMFVGVVV. The Cytoplasmic portion of the chain corresponds to 1517 to 1578; the sequence is ENFHKCRQHQ…RLLVHHLCTS (62 aa). The stretch at 1564 to 1822 is one IV repeat; the sequence is DYSRFRLLVH…VVIAVLMKHL (259 aa). A helical transmembrane segment spans residues 1579–1599; the sequence is HYLDLFITGVIGLNVVTMAME. At 1600–1613 the chain is on the extracellular side; it reads HYQQPQILDEALKI. The helical transmembrane segment at 1614–1635 threads the bilayer; it reads CNYIFTVIFVFESVFKLVAFGF. Topologically, residues 1636-1642 are cytoplasmic; sequence RRFFQDR. Residues 1643–1661 traverse the membrane as a helical segment; the sequence is WNQLDLAIVLLSIMGITLE. At 1662–1675 the chain is on the extracellular side; that stretch reads EIEVNLSLPINPTI. A glycan (N-linked (GlcNAc...) asparagine) is linked at N1666. The helical transmembrane segment at 1676–1699 threads the bilayer; that stretch reads IRIMRVLRIARVLKLLKMAVGMRA. Residues 1700–1713 lie on the Cytoplasmic side of the membrane; that stretch reads LLHTVMQALPQVGN. Residues 1714–1734 traverse the membrane as a helical segment; it reads LGLLFMLLFFIFAALGVELFG. Residues 1735–1794 lie on the Extracellular side of the membrane; it reads DLECDETHPCEGLGRHATFRNFGMAFLTLFRVSTGDNWNGIMKDTLRDCDQESTCYNTVI. Residues 1795–1822 form a helical membrane-spanning segment; the sequence is SPIYFVSFVLTAQFVLVNVVIAVLMKHL. Topologically, residues 1823–2254 are cytoplasmic; sequence EESNKEAKEE…LSSDPTDMDP (432 aa). A disordered region spans residues 2153 to 2254; the sequence is DSGSQPRLCP…LSSDPTDMDP (102 aa). Low complexity predominate over residues 2184–2193; sequence SPPSISIDPP. 2 stretches are compositionally biased toward polar residues: residues 2220–2232 and 2240–2254; these read PSVS…TAAS and LSLS…DMDP.

The protein belongs to the calcium channel alpha-1 subunit (TC 1.A.1.11) family. CACNA1G subfamily. Post-translationally, in response to raising of intracellular calcium, the T-type channels are activated by CaM-kinase II. Highly expressed in brain. Moderate expression in heart; low expression in placenta, kidney and lung.

It localises to the cell membrane. Its subcellular location is the cytoplasm. The enzyme catalyses Ca(2+)(in) = Ca(2+)(out). Voltage-sensitive calcium channels (VSCC) mediate the entry of calcium ions into excitable cells and are also involved in a variety of calcium-dependent processes, including muscle contraction, hormone or neurotransmitter release, gene expression, cell motility, cell division and cell death. The isoform alpha-1G gives rise to T-type calcium currents. T-type calcium channels belong to the 'low-voltage activated (LVA)' group and are strongly blocked by nickel and mibefradil. A particularity of this type of channels is an opening at quite negative potentials and a voltage-dependent inactivation. T-type channels serve pacemaking functions in both central neurons and cardiac nodal cells and support calcium signaling in secretory cells and vascular smooth muscle. They may also be involved in the modulation of firing patterns of neurons which is important for information processing as well as in cell growth processes. This is Voltage-dependent T-type calcium channel subunit alpha-1G (Cacna1g) from Rattus norvegicus (Rat).